We begin with the raw amino-acid sequence, 306 residues long: Ribosomal RNA small subunit methyltransferase H (306 aa).

S-adenosyl-L-methionine contacts are provided by residues 33-35 (GGY), Asp-51, Phe-78, Asp-96, and Gln-103.

The protein belongs to the methyltransferase superfamily. RsmH family.

It is found in the cytoplasm. The catalysed reaction is cytidine(1402) in 16S rRNA + S-adenosyl-L-methionine = N(4)-methylcytidine(1402) in 16S rRNA + S-adenosyl-L-homocysteine + H(+). In terms of biological role, specifically methylates the N4 position of cytidine in position 1402 (C1402) of 16S rRNA. The protein is Ribosomal RNA small subunit methyltransferase H of Rickettsia prowazekii (strain Madrid E).